Here is a 115-residue protein sequence, read N- to C-terminus: Protein TrbA (115 aa).

4 consecutive transmembrane segments (helical) span residues 5-25 (YLKM…GYFF), 39-59 (LVFL…LWFL), 60-80 (CGAI…AALP), and 91-111 (IFIC…FIRG).

The protein localises to the cell membrane. This Escherichia coli (strain K12) protein is Protein TrbA (trbA).